A 414-amino-acid chain; its full sequence is S-adenosylmethionine synthase (414 aa).

Histidine 11 provides a ligand contact to ATP. Residue aspartate 13 participates in Mg(2+) binding. Glutamate 39 lines the K(+) pocket. Glutamate 52 and glutamine 95 together coordinate L-methionine. The interval 95–105 (QSPDIAQGVNL) is flexible loop. ATP-binding positions include 169–171 (DGK), 245–246 (KF), aspartate 254, 260–261 (RK), alanine 277, and lysine 281. Aspartate 254 lines the L-methionine pocket. Lysine 285 serves as a coordination point for L-methionine.

This sequence belongs to the AdoMet synthase family. As to quaternary structure, homotetramer; dimer of dimers. Mg(2+) serves as cofactor. K(+) is required as a cofactor.

It localises to the cytoplasm. The catalysed reaction is L-methionine + ATP + H2O = S-adenosyl-L-methionine + phosphate + diphosphate. It participates in amino-acid biosynthesis; S-adenosyl-L-methionine biosynthesis; S-adenosyl-L-methionine from L-methionine: step 1/1. Functionally, catalyzes the formation of S-adenosylmethionine (AdoMet) from methionine and ATP. The overall synthetic reaction is composed of two sequential steps, AdoMet formation and the subsequent tripolyphosphate hydrolysis which occurs prior to release of AdoMet from the enzyme. In Synechococcus sp. (strain JA-3-3Ab) (Cyanobacteria bacterium Yellowstone A-Prime), this protein is S-adenosylmethionine synthase.